We begin with the raw amino-acid sequence, 278 residues long: Sulfur carrier protein FdhD (278 aa).

Catalysis depends on Cys-121, which acts as the Cysteine persulfide intermediate. Residue Phe-260–Arg-265 participates in Mo-bis(molybdopterin guanine dinucleotide) binding.

This sequence belongs to the FdhD family.

Its subcellular location is the cytoplasm. Required for formate dehydrogenase (FDH) activity. Acts as a sulfur carrier protein that transfers sulfur from IscS to the molybdenum cofactor prior to its insertion into FDH. This is Sulfur carrier protein FdhD from Salmonella typhi.